Reading from the N-terminus, the 810-residue chain is LPS-assembly protein LptD (810 aa).

Positions 1–29 (MTKWTLGYSYPIALTISLIPALTPAIVQA) are cleaved as a signal peptide.

Belongs to the LptD family. In terms of assembly, component of the lipopolysaccharide transport and assembly complex. Interacts with LptE and LptA.

The protein localises to the cell outer membrane. Together with LptE, is involved in the assembly of lipopolysaccharide (LPS) at the surface of the outer membrane. This Aeromonas salmonicida (strain A449) protein is LPS-assembly protein LptD.